Consider the following 187-residue polypeptide: dITP/XTP pyrophosphatase (187 aa).

Substrate is bound at residue 7 to 12 (TNNPYK). The Mg(2+) site is built by Glu36 and Asp65. Residue Asp65 is the Proton acceptor of the active site. Substrate is bound by residues Thr66, 140–143 (FGYD), Lys163, and 168–169 (HR).

It belongs to the HAM1 NTPase family. In terms of assembly, homodimer. The cofactor is Mg(2+).

The catalysed reaction is XTP + H2O = XMP + diphosphate + H(+). The enzyme catalyses dITP + H2O = dIMP + diphosphate + H(+). It catalyses the reaction ITP + H2O = IMP + diphosphate + H(+). Pyrophosphatase that catalyzes the hydrolysis of nucleoside triphosphates to their monophosphate derivatives, with a high preference for the non-canonical purine nucleotides XTP (xanthosine triphosphate), dITP (deoxyinosine triphosphate) and ITP. Seems to function as a house-cleaning enzyme that removes non-canonical purine nucleotides from the nucleotide pool, thus preventing their incorporation into DNA/RNA and avoiding chromosomal lesions. This is dITP/XTP pyrophosphatase from Pyrobaculum aerophilum (strain ATCC 51768 / DSM 7523 / JCM 9630 / CIP 104966 / NBRC 100827 / IM2).